The primary structure comprises 937 residues: Calsyntenin-2 (937 aa).

A signal peptide spans 1-22 (MKMRAITAMLLLVLSGQCGILA). Residues 23 to 818 (GKVNKHKPWI…NSDHISGTPP (796 aa)) are Extracellular-facing. Cadherin domains follow at residues 32–148 (IETS…SPVF) and 149–249 (REPL…KPGW). A glycan (N-linked (GlcNAc...) asparagine) is linked at N86. N330, N365, and N716 each carry an N-linked (GlcNAc...) asparagine glycan. The chain crosses the membrane as a helical span at residues 819–839 (AATVVIVMCIAALVVIVVLGI). The Cytoplasmic portion of the chain corresponds to 840–937 (YRIHTTHQDS…LEWDPSTLPY (98 aa)). Positions 846–937 (HQDSSKEDEE…LEWDPSTLPY (92 aa)) are disordered. Residues 865–874 (DNSNLNSIEG) are compositionally biased toward polar residues. Composition is skewed to acidic residues over residues 881-900 (VREE…DDLA) and 907-917 (ESEDSDEDEET).

The protein belongs to the calsyntenin family. As to quaternary structure, homooligomer and heterooligomer; mediates both homophilic and heterophilc interactions with clstn1 and clstn3 paralogs via cadherin domains. In terms of tissue distribution, by 48 hours post-fertilization (hpf), widely expressed in the brain, with strong expression in the telencephalon and the midbrain.

The protein resides in the postsynaptic cell membrane. It is found in the endoplasmic reticulum membrane. The protein localises to the golgi apparatus membrane. It localises to the cell projection. Its subcellular location is the dendrite. Functionally, postsynaptic adhesion molecule. Promotes synapse development by acting as a cell adhesion molecule at the postsynaptic membrane, which associates with presynaptic neurexins. The chain is Calsyntenin-2 (clstn2a) from Danio rerio (Zebrafish).